Here is a 304-residue protein sequence, read N- to C-terminus: UDP-3-O-acyl-N-acetylglucosamine deacetylase (304 aa).

The Zn(2+) site is built by histidine 79, histidine 238, and aspartate 242. The active-site Proton donor is the histidine 265.

It belongs to the LpxC family. Zn(2+) is required as a cofactor.

The catalysed reaction is a UDP-3-O-[(3R)-3-hydroxyacyl]-N-acetyl-alpha-D-glucosamine + H2O = a UDP-3-O-[(3R)-3-hydroxyacyl]-alpha-D-glucosamine + acetate. It participates in glycolipid biosynthesis; lipid IV(A) biosynthesis; lipid IV(A) from (3R)-3-hydroxytetradecanoyl-[acyl-carrier-protein] and UDP-N-acetyl-alpha-D-glucosamine: step 2/6. In terms of biological role, catalyzes the hydrolysis of UDP-3-O-myristoyl-N-acetylglucosamine to form UDP-3-O-myristoylglucosamine and acetate, the committed step in lipid A biosynthesis. The chain is UDP-3-O-acyl-N-acetylglucosamine deacetylase from Laribacter hongkongensis (strain HLHK9).